The chain runs to 566 residues: Endoglucanase B (566 aa).

The signal sequence occupies residues M1–A30. Catalysis depends on E177, which acts as the Proton donor. Catalysis depends on E299, which acts as the Nucleophile.

It belongs to the glycosyl hydrolase 5 (cellulase A) family.

It carries out the reaction Endohydrolysis of (1-&gt;4)-beta-D-glucosidic linkages in cellulose, lichenin and cereal beta-D-glucans.. This chain is Endoglucanase B (celB), found in Paenibacillus lautus (Bacillus lautus).